The following is a 249-amino-acid chain: 2,3-bisphosphoglycerate-dependent phosphoglycerate mutase (249 aa).

Residues 11-18 (RHGESDWN), 24-25 (TG), arginine 63, 90-93 (ERHY), lysine 101, 117-118 (RR), and 184-185 (GN) contribute to the substrate site. Histidine 12 acts as the Tele-phosphohistidine intermediate in catalysis. Glutamate 90 (proton donor/acceptor) is an active-site residue.

The protein belongs to the phosphoglycerate mutase family. BPG-dependent PGAM subfamily.

The enzyme catalyses (2R)-2-phosphoglycerate = (2R)-3-phosphoglycerate. It participates in carbohydrate degradation; glycolysis; pyruvate from D-glyceraldehyde 3-phosphate: step 3/5. Catalyzes the interconversion of 2-phosphoglycerate and 3-phosphoglycerate. This is 2,3-bisphosphoglycerate-dependent phosphoglycerate mutase from Mycobacterium bovis (strain BCG / Pasteur 1173P2).